The primary structure comprises 1204 residues: Exportin-5 (1204 aa).

Ala2 bears the N-acetylalanine mark. A necessary for interaction with Ran region spans residues 2 to 108; that stretch reads AMDQVNALCE…ANGTLNILEE (107 aa). Lys396 bears the N6-acetyllysine mark. A necessary for interaction with ILF3 region spans residues 533–640; that stretch reads ELLQMVLNFD…KQLLSNELLL (108 aa). The pre-miRNA binding stretch occupies residues 641–642; it reads TQ. The residue at position 826 (Ser826) is a Phosphoserine.

The protein belongs to the exportin family. In terms of assembly, component of a nuclear export receptor complex composed of XPO5, RAN, dsRNA-binding proteins and dsRNA. Found in a nuclear export complex with XPO5, RAN, EEF1A1, and aminoacylated tRNA. Found in a nuclear export complex with XPO5, RAN, ILF3 and dsRNA. Found in a nuclear export complex with XPO5, RAN and pre-miRNA. Found in a nuclear export complex with XPO5, RAN, ILF3 and minihelix VA1 dsRNA. Found in a nuclear export complex with XPO5, RAN, ILF3, ZNF346 and dsRNA. Interacts with EEF1A1, ILF3, NUP153, NUP214 and ZNF346. Interacts with RAN and cargo proteins in a GTP-dependent manner. Interacts with isoform 5 of ADAR/ADAR1 (via DRBM domains). Interacts with SMAD4; mediates nuclear export of SMAD4. Interacts with RAN (GTP-bound form). Expressed in heart, brain, placenta, lung, skeletal muscle, kidney and pancreas.

The protein resides in the nucleus. The protein localises to the cytoplasm. Functionally, mediates the nuclear export of proteins bearing a double-stranded RNA binding domain (dsRBD) and double-stranded RNAs (cargos). XPO5 in the nucleus binds cooperatively to the RNA and to the GTPase Ran in its active GTP-bound form. Proteins containing dsRBDs can associate with this trimeric complex through the RNA. Docking of this complex to the nuclear pore complex (NPC) is mediated through binding to nucleoporins. Upon transit of a nuclear export complex into the cytoplasm, hydrolysis of Ran-GTP to Ran-GDP (induced by RANBP1 and RANGAP1, respectively) cause disassembly of the complex and release of the cargo from the export receptor. XPO5 then returns to the nuclear compartment by diffusion through the nuclear pore complex, to mediate another round of transport. The directionality of nuclear export is thought to be conferred by an asymmetric distribution of the GTP- and GDP-bound forms of Ran between the cytoplasm and nucleus. Overexpression may in some circumstances enhance RNA-mediated gene silencing (RNAi). Mediates nuclear export of isoform 5 of ADAR/ADAR1 in a RanGTP-dependent manner. Mediates the nuclear export of micro-RNA precursors, which form short hairpins. Also mediates the nuclear export of synthetic short hairpin RNAs used for RNA interference. In some circumstances can also mediate the nuclear export of deacylated and aminoacylated tRNAs. Specifically recognizes dsRNAs that lack a 5'-overhang in a sequence-independent manner, have only a short 3'-overhang, and that have a double-stranded length of at least 15 base-pairs. Binding is dependent on Ran-GTP. In terms of biological role, (Microbial infection) Mediates the nuclear export of adenovirus VA1 dsRNA. In Homo sapiens (Human), this protein is Exportin-5 (XPO5).